The primary structure comprises 170 residues: Protein AIG2 A (170 aa).

Substrate is bound at residue 15–20 (YGSFQE). Glu83 functions as the Proton acceptor in the catalytic mechanism. Positions 147 to 162 (KNPNGRSREEFEKFVQ) are enriched in basic and acidic residues. The segment at 147–170 (KNPNGRSREEFEKFVQDDSSPASA) is disordered.

Belongs to the gamma-glutamylcyclotransferase family. In terms of tissue distribution, ubiquitous.

Functionally, putative gamma-glutamylcyclotransferase. This is Protein AIG2 A from Arabidopsis thaliana (Mouse-ear cress).